Here is an 897-residue protein sequence, read N- to C-terminus: Protein transport protein SEC24-1 (897 aa).

Zn(2+) is bound by residues cysteine 213, cysteine 216, cysteine 235, and cysteine 238. The segment at 213-238 (CRRCRSYINPFAKFIEQGRRWRCNFC) is zinc finger-like.

This sequence belongs to the SEC23/SEC24 family. SEC24 subfamily. The COPII coat is composed of at least 5 proteins: the SEC23/24 complex, the SEC13/31 complex, and the protein SAR1. Golgi apparatus membrane; Peripheral membrane protein; Cytoplasmic side.

The protein localises to the cytoplasm. It is found in the cytoplasmic vesicle. The protein resides in the COPII-coated vesicle membrane. It localises to the endoplasmic reticulum membrane. Its subcellular location is the golgi apparatus membrane. Component of the coat protein complex II (COPII) which promotes the formation of transport vesicles from the endoplasmic reticulum (ER). The coat has two main functions, the physical deformation of the endoplasmic reticulum membrane into vesicles and the selection of cargo molecules. This Candida glabrata (strain ATCC 2001 / BCRC 20586 / JCM 3761 / NBRC 0622 / NRRL Y-65 / CBS 138) (Yeast) protein is Protein transport protein SEC24-1 (SEC241).